A 351-amino-acid chain; its full sequence is Calcium homeostasis modulator 1 (351 aa).

The Cytoplasmic segment spans residues 1–20 (MDKFRMMFQFLQSNQESFMN). The central pore stretch occupies residues 9–36 (QFLQSNQESFMNGICGIMALASAQMYSS). The chain crosses the membrane as a helical span at residues 21–36 (GICGIMALASAQMYSS). Topologically, residues 37 to 48 (FEFSCPCMPEYN) are extracellular. Disulfide bonds link Cys-41–Cys-126 and Cys-43–Cys-160. A helical transmembrane segment spans residues 49-71 (YTYGIGLLIIPPIWFFLLGFVLN). The segment at 62-69 (WFFLLGFV) is phospholipid-binding. At 72-98 (NNVSVLAEEWKRPTGRRTKDPSVLRYM) the chain is on the cytoplasmic side. The helical transmembrane segment at 99-124 (LCSITQRSLIAPAVWVSVTLMDGKSF) threads the bilayer. A lipid anchor (S-palmitoyl cysteine) is attached at Cys-100. A phospholipid-binding region spans residues 104–116 (QRSLIAPAVWVSV). The Extracellular portion of the chain corresponds to 125–177 (LCAFSINLDIEKFGNASLVIGMTETEKLKFLARIPCKDLFEDNEVRVAATRYI). Residue Asn-139 is glycosylated (N-linked (GlcNAc...) asparagine). A helical membrane pass occupies residues 178 to 203 (KCISQACGWMFLLMMTFTAFLIRAIR). The interval 189–199 (LLMMTFTAFLI) is phospholipid-binding. At 204 to 351 (PCFTQAAFLK…KEWAVYYSKV (148 aa)) the chain is on the cytoplasmic side. A lipid anchor (S-palmitoyl cysteine) is attached at Cys-205. The interval 259-281 (HRHQSKDTSDAEEEEKQRSDEDK) is disordered. Residues 263–281 (SKDTSDAEEEEKQRSDEDK) show a composition bias toward basic and acidic residues.

This sequence belongs to the CALHM family. Oligomerizes to form hexamers and octamers. Does not form gap junctions. Associates with CALHM3 as a pore-forming subunit in a hetero-hexameric channel complex. Post-translationally, N-glycosylated. In terms of processing, palmitoylated.

The protein localises to the cell membrane. It localises to the endoplasmic reticulum membrane. The protein resides in the basolateral cell membrane. It catalyses the reaction ATP(in) = ATP(out). It carries out the reaction Ca(2+)(in) = Ca(2+)(out). The catalysed reaction is Mg(2+)(in) = Mg(2+)(out). The enzyme catalyses Na(+)(in) = Na(+)(out). It catalyses the reaction K(+)(in) = K(+)(out). It carries out the reaction Li(+)(in) = Li(+)(out). The catalysed reaction is Rb(+)(in) = Rb(+)(out). The enzyme catalyses Cs(+)(in) = Cs(+)(out). It catalyses the reaction chloride(in) = chloride(out). Activated in response to membrane depolarization and low extracellular Ca(2+) concentration. Inhibited by ruthenium red. In terms of biological role, pore-forming subunit of a voltage-gated ion channel. Has poor ion selectivity and forms a wide pore that mediates permeation of small ions including Ca(2+), Na(+), K(+) and Cl(-), as well as larger ions such as ATP(4-). This is Calcium homeostasis modulator 1 from Oryzias latipes (Japanese rice fish).